Reading from the N-terminus, the 131-residue chain is Cuticle protein 79, isoform B (131 aa).

3 repeat units span residues 37–40 (AAPA), 45–48 (AAPA), and 53–56 (AAPA).

In terms of biological role, component of the cuticle of migratory locust which contains more than 100 different structural proteins. The sequence is that of Cuticle protein 79, isoform B from Locusta migratoria (Migratory locust).